Consider the following 236-residue polypeptide: Small ribosomal subunit protein uS3 (236 aa).

Positions 39–107 (VRQFLTKELK…PAQINISEVR (69 aa)) constitute a KH type-2 domain.

Belongs to the universal ribosomal protein uS3 family. In terms of assembly, part of the 30S ribosomal subunit. Forms a tight complex with proteins S10 and S14.

In terms of biological role, binds the lower part of the 30S subunit head. Binds mRNA in the 70S ribosome, positioning it for translation. This Aeromonas salmonicida (strain A449) protein is Small ribosomal subunit protein uS3.